Consider the following 365-residue polypeptide: uncharacterized protein (365 aa).

Topologically, residues Met-1–Lys-133 are cytoplasmic. A helical transmembrane segment spans residues Leu-134–Thr-154. Residues Tyr-155–Tyr-169 are Extracellular-facing. The chain crosses the membrane as a helical span at residues Leu-170 to Phe-190. Topologically, residues Lys-191 to Glu-365 are cytoplasmic.

Its subcellular location is the membrane. This is an uncharacterized protein from Saccharomyces cerevisiae (strain ATCC 204508 / S288c) (Baker's yeast).